We begin with the raw amino-acid sequence, 512 residues long: ATP synthase subunit beta 2 (512 aa).

174-181 contributes to the ATP binding site; sequence GGAGVGKT. Residues 479-494 are compositionally biased toward basic and acidic residues; that stretch reads RRKEEAAREADARRDA. A disordered region spans residues 479–512; it reads RRKEEAAREADARRDAAAGAASGSAGPQGAQHGR.

The protein belongs to the ATPase alpha/beta chains family. F-type ATPases have 2 components, CF(1) - the catalytic core - and CF(0) - the membrane proton channel. CF(1) has five subunits: alpha(3), beta(3), gamma(1), delta(1), epsilon(1). CF(0) has three main subunits: a(1), b(2) and c(9-12). The alpha and beta chains form an alternating ring which encloses part of the gamma chain. CF(1) is attached to CF(0) by a central stalk formed by the gamma and epsilon chains, while a peripheral stalk is formed by the delta and b chains.

The protein localises to the cell inner membrane. The catalysed reaction is ATP + H2O + 4 H(+)(in) = ADP + phosphate + 5 H(+)(out). Functionally, produces ATP from ADP in the presence of a proton gradient across the membrane. The catalytic sites are hosted primarily by the beta subunits. The polypeptide is ATP synthase subunit beta 2 (Burkholderia thailandensis (strain ATCC 700388 / DSM 13276 / CCUG 48851 / CIP 106301 / E264)).